The chain runs to 245 residues: Rhamnosyl O-methyltransferase (245 aa).

A signal peptide spans 1–38 (MGLVWRSRTSLVGQLIGLVRLVASFAAQLFYRPSDAVA).

It belongs to the rhamnosyl O-methyltransferase family.

Its function is as follows. Catalyzes the O-methylation of the hydroxyl group located on C-2 of the first rhamnosyl residue linked to the phenolic group of glycosylated phenolphthiocerol dimycocerosates (PGL) and p-hydroxybenzoic acid derivatives (p-HBAD). The sequence is that of Rhamnosyl O-methyltransferase from Mycobacterium bovis (strain ATCC BAA-935 / AF2122/97).